The sequence spans 461 residues: L-seryl-tRNA(Sec) selenium transferase (461 aa).

Lys294 carries the N6-(pyridoxal phosphate)lysine modification.

The protein belongs to the SelA family. The cofactor is pyridoxal 5'-phosphate.

It is found in the cytoplasm. The enzyme catalyses L-seryl-tRNA(Sec) + selenophosphate + H(+) = L-selenocysteinyl-tRNA(Sec) + phosphate. The protein operates within aminoacyl-tRNA biosynthesis; selenocysteinyl-tRNA(Sec) biosynthesis; selenocysteinyl-tRNA(Sec) from L-seryl-tRNA(Sec) (bacterial route): step 1/1. In terms of biological role, converts seryl-tRNA(Sec) to selenocysteinyl-tRNA(Sec) required for selenoprotein biosynthesis. The sequence is that of L-seryl-tRNA(Sec) selenium transferase from Actinobacillus pleuropneumoniae serotype 7 (strain AP76).